We begin with the raw amino-acid sequence, 640 residues long: Zinc finger and BTB domain-containing protein 22 (640 aa).

The region spanning 57 to 121 is the BTB domain; that stretch reads CDVSIRVQGR…AYTGRLSMAA (65 aa). Disordered regions lie at residues 191–244, 308–327, and 332–482; these read RSHA…PVFP, PAPAPLVPQDPDLEEDEEED, and CEDD…GGTG. Positions 192 to 210 are enriched in polar residues; sequence SHASSRASENQSPSSSNYF. A Phosphoserine modification is found at S203. The segment covering 318 to 327 has biased composition (acidic residues); the sequence is PDLEEDEEED. A compositionally biased stretch (low complexity) spans 431-442; the sequence is SSSSSSSSSSSS. Positions 469-482 are enriched in gly residues; the sequence is GMPGGPGGTPGGTG. The segment at 490 to 511 adopts a C2H2-type 1; atypical zinc-finger fold; sequence FLCHCGKAFSHKSMRDRHVNMH. 2 consecutive C2H2-type zinc fingers follow at residues 517–539 and 545–571; these read FDCPVCNKKFKMKHHLTEHMKTH and YECGVCAKKFMWRDSFMRHRGHCERRH. The tract at residues 571–640 is disordered; it reads HRLVGGGGGG…MGFGGGGGTN (70 aa). Over residues 574-588 the composition is skewed to gly residues; that stretch reads VGGGGGGGPGPGGPT.

It belongs to the krueppel C2H2-type zinc-finger protein family.

It localises to the nucleus. May be involved in transcriptional regulation. The protein is Zinc finger and BTB domain-containing protein 22 (ZBTB22) of Canis lupus familiaris (Dog).